The sequence spans 278 residues: HTH-type transcriptional regulator HdfR (278 aa).

One can recognise an HTH lysR-type domain in the interval 1–58 (MDTELLKTFLEVSRTRHFGRAAEALYLTQSAVSFRIRQLENQLGVNLFTRHRNNIRLT). Positions 18–37 (FGRAAEALYLTQSAVSFRIR) form a DNA-binding region, H-T-H motif.

It belongs to the LysR transcriptional regulatory family.

In terms of biological role, negatively regulates the transcription of the flagellar master operon flhDC by binding to the upstream region of the operon. This is HTH-type transcriptional regulator HdfR from Salmonella newport (strain SL254).